The chain runs to 257 residues: Chymotrypsin-like elastase family member 3B (257 aa).

The segment at residues 1-2 (VA) is a signal peptide (or 3). A propeptide spans 3 to 15 (SGYGPPSSHPSSR) (activation peptide). Residues 16–255 (VVNGEDAVPY…FIDWIEETIA (240 aa)) form the Peptidase S1 domain. Asn-38 carries N-linked (GlcNAc...) asparagine glycosylation. Disulfide bonds link Cys-45–Cys-61 and Cys-104–Cys-107. The active-site Charge relay system is the His-60. Residue Asp-110 is the Charge relay system of the active site. 3 disulfides stabilise this stretch: Cys-144–Cys-210, Cys-175–Cys-191, and Cys-200–Cys-231. Catalysis depends on Ser-204, which acts as the Charge relay system.

This sequence belongs to the peptidase S1 family. Elastase subfamily.

The catalysed reaction is Preferential cleavage: Ala-|-Xaa. Does not hydrolyze elastin.. Functionally, efficient protease with alanine specificity but only little elastolytic activity. The sequence is that of Chymotrypsin-like elastase family member 3B (CELA3B) from Macaca mulatta (Rhesus macaque).